The sequence spans 130 residues: Large ribosomal subunit protein bL19 (130 aa).

It belongs to the bacterial ribosomal protein bL19 family.

Functionally, this protein is located at the 30S-50S ribosomal subunit interface and may play a role in the structure and function of the aminoacyl-tRNA binding site. The protein is Large ribosomal subunit protein bL19 of Burkholderia orbicola (strain MC0-3).